The sequence spans 390 residues: S-adenosylmethionine synthase (390 aa).

Residue His-17 participates in ATP binding. Asp-19 is a Mg(2+) binding site. A K(+)-binding site is contributed by Glu-45. Glu-58 and Gln-101 together coordinate L-methionine. The flexible loop stretch occupies residues 101–111 (QSPDIGQGVDT). ATP contacts are provided by residues 160 to 162 (DGK), 226 to 227 (RF), Asp-235, 241 to 242 (RK), Ala-258, and Lys-262. Asp-235 is an L-methionine binding site. Lys-266 serves as a coordination point for L-methionine.

Belongs to the AdoMet synthase family. As to quaternary structure, homotetramer; dimer of dimers. Mg(2+) is required as a cofactor. Requires K(+) as cofactor.

It localises to the cytoplasm. The catalysed reaction is L-methionine + ATP + H2O = S-adenosyl-L-methionine + phosphate + diphosphate. It functions in the pathway amino-acid biosynthesis; S-adenosyl-L-methionine biosynthesis; S-adenosyl-L-methionine from L-methionine: step 1/1. In terms of biological role, catalyzes the formation of S-adenosylmethionine (AdoMet) from methionine and ATP. The overall synthetic reaction is composed of two sequential steps, AdoMet formation and the subsequent tripolyphosphate hydrolysis which occurs prior to release of AdoMet from the enzyme. The sequence is that of S-adenosylmethionine synthase from Anaeromyxobacter dehalogenans (strain 2CP-1 / ATCC BAA-258).